Consider the following 575-residue polypeptide: MMYIRRLNDQTANQIAAGEVVERPASVVKELIENSIDAHASCIRVDILQGGAKQIRIQDDGDGIHPEDLVLALERHATSKIAKIDDLQDVTTLGFRGEALASISAVSRLTLTSRQKNAEMGYRISNISHKIMTPVPAAHPQGTTIDVQDLFYNTPARRKFLRSPATEFQHIRRIIERLALSHFTTEFLLHHNEKEIIHFKSATTISGQENRIKSILGDVFMQSALAIEFSQSGLTLKGYIAEAAYTRSQPDLQYIYVNGRFVRDKLIAQALRQAYHDVLFHGRHPAYVLYLEIDPAFVDINVHPTKHEVRFRDPQWVRDFLIHAVKTALAQTKPGIAHPLPQSTAEYNPITNFAPTPLIEGQGNLSLIQEQPAPYTQTIVHKHPLGHALAQLQGIYILSQNEKGLVIVDMHAAHERILYEKMKKQLAEVGLVMQSLLVPINLSLNPQEITAWQTNKALFARLGFEIESFGPDKIVVRRHPSLLKPKNLENLIRDVLADLITHNTTSRVGERINAVLATLACHAALRAPHYLTIEEMEALLREMEKTEHGGLCNHGRPTWKQFDIAELDTFFLRGQ.

Belongs to the DNA mismatch repair MutL/HexB family.

This protein is involved in the repair of mismatches in DNA. It is required for dam-dependent methyl-directed DNA mismatch repair. May act as a 'molecular matchmaker', a protein that promotes the formation of a stable complex between two or more DNA-binding proteins in an ATP-dependent manner without itself being part of a final effector complex. This chain is DNA mismatch repair protein MutL, found in Coxiella burnetii (strain CbuG_Q212) (Coxiella burnetii (strain Q212)).